The sequence spans 1034 residues: Teashirt homolog 2 (1034 aa).

Residues 1–90 (MPRRKQQAPK…NESLLSDASD (90 aa)) form a disordered region. Positions 13 to 38 (AGYAQEEQLKEEEEIKEEEEEEDSGS) form a coiled coil. Acidic residues predominate over residues 21-36 (LKEEEEIKEEEEEEDS). Residues 65–90 (SYQNSPGSHLSNQDAENESLLSDASD) are compositionally biased toward polar residues. Residue lysine 188 forms a Glycyl lysine isopeptide (Lys-Gly) (interchain with G-Cter in SUMO2) linkage. C2H2-type zinc fingers lie at residues 215-239 (FRCRQCSAAYDTLVELTVHMNETGH) and 275-299 (LKCMFCGDSFDSLQDLSVHMIKTKH). Positions 239–265 (HYQDDNRKKDKLRPTSYSKPRKRAFQD) are disordered. Glycyl lysine isopeptide (Lys-Gly) (interchain with G-Cter in SUMO2) cross-links involve residues lysine 306 and lysine 315. The segment at 380–404 (LKCMECGSSHDTLQQLTTHMMVTGH) adopts a C2H2-type 3; atypical zinc-finger fold. A Glycyl lysine isopeptide (Lys-Gly) (interchain with G-Cter in SUMO2) cross-link involves residue lysine 417. Residues 432 to 455 (LSEAPNSDSLAPKPSSNSASDCTA) show a composition bias toward polar residues. Residues 432–496 (LSEAPNSDSL…PLQKPLDPTI (65 aa)) are disordered. The span at 459 to 482 (ELKKESKKERPEETSKDEKVVKSE) shows a compositional bias: basic and acidic residues. Glycyl lysine isopeptide (Lys-Gly) (interchain with G-Cter in SUMO2) cross-links involve residues lysine 461, lysine 480, lysine 497, lysine 601, and lysine 652. Disordered regions lie at residues 598-676 (TQVK…TSAL) and 763-789 (QPIDLTKSKSKKAESSQAQSCMSPPQK). A compositionally biased stretch (basic and acidic residues) spans 600–668 (VKKESEDKDE…KEGSEKEKPQ (69 aa)). Residues lysine 800 and lysine 820 each participate in a glycyl lysine isopeptide (Lys-Gly) (interchain with G-Cter in SUMO2) cross-link. Positions 841–911 (RKGRQSNWNP…NVKYQLRKTG (71 aa)) form a DNA-binding region, homeobox; atypical. A C2H2-type 4 zinc finger spans residues 926–948 (FYCSDCASQFRTPSTYISHLESH). Residue lysine 966 forms a Glycyl lysine isopeptide (Lys-Gly) (interchain with G-Cter in SUMO2) linkage. Residue serine 980 is modified to Phosphoserine. Residues 994 to 1017 (FKCKLCCRTFVSKHAVKLHLSKTH) form a C2H2-type 5 zinc finger. A disordered region spans residues 1014 to 1034 (SKTHSKSPEHHSQFVTDVDEE).

Belongs to the teashirt C2H2-type zinc-finger protein family. As to quaternary structure, interacts (via homeobox domain) with APBB1 (via PID domain 1). Post-translationally, sumoylated. In terms of tissue distribution, expressed in brain; strongly reduced in post-mortem elderly subjects with Alzheimer disease.

Its subcellular location is the nucleus. In terms of biological role, probable transcriptional regulator involved in developmental processes. May act as a transcriptional repressor (Potential). The protein is Teashirt homolog 2 (TSHZ2) of Homo sapiens (Human).